Consider the following 365-residue polypeptide: Methylthioribose-1-phosphate isomerase (365 aa).

Asp255 serves as the catalytic Proton donor.

The protein belongs to the eIF-2B alpha/beta/delta subunits family. MtnA subfamily.

It localises to the cytoplasm. The protein resides in the nucleus. It catalyses the reaction 5-(methylsulfanyl)-alpha-D-ribose 1-phosphate = 5-(methylsulfanyl)-D-ribulose 1-phosphate. It functions in the pathway amino-acid biosynthesis; L-methionine biosynthesis via salvage pathway; L-methionine from S-methyl-5-thio-alpha-D-ribose 1-phosphate: step 1/6. Catalyzes the interconversion of methylthioribose-1-phosphate (MTR-1-P) into methylthioribulose-1-phosphate (MTRu-1-P). The polypeptide is Methylthioribose-1-phosphate isomerase (Drosophila willistoni (Fruit fly)).